The chain runs to 333 residues: Bifunctional phosphoglucose/phosphomannose isomerase (333 aa).

One can recognise an SIS domain in the interval 22–160 (LEGALEGVEE…SGALGVDLEA (139 aa)). 6 residues coordinate D-fructose 6-phosphate: glycine 39, serine 40, serine 84, serine 86, threonine 89, and arginine 136. Residue glutamate 211 is the Proton acceptor of the active site. The D-fructose 6-phosphate site is built by histidine 227 and lysine 322. Residue histidine 227 is the Proton donor of the active site. Residue lysine 322 is the Proton acceptor of the active site.

The protein belongs to the PGI/PMI family. Homodimer.

It catalyses the reaction alpha-D-glucose 6-phosphate = beta-D-fructose 6-phosphate. It carries out the reaction D-mannose 6-phosphate = D-fructose 6-phosphate. Its activity is regulated as follows. Inhibited by low concentrations of erythrose 4-phosphate and 6-phosphogluconate. Dual specificity isomerase that catalyzes the isomerization of both glucose-6-phosphate and mannose-6-phosphate to fructose-6-phosphate with similar catalytic efficiency. This chain is Bifunctional phosphoglucose/phosphomannose isomerase, found in Aeropyrum pernix (strain ATCC 700893 / DSM 11879 / JCM 9820 / NBRC 100138 / K1).